The following is a 699-amino-acid chain: Polyribonucleotide nucleotidyltransferase (699 aa).

Mg(2+) contacts are provided by D485 and D491. The region spanning 552-611 (PRITTIKINPEKIRDVIGKGGAVIRALTEETGTTIELEDDGTVKIASSNGEATKEAIRRI) is the KH domain. Residues 621–689 (GRIYNGKVIR…RQGRVRLSIK (69 aa)) form the S1 motif domain.

This sequence belongs to the polyribonucleotide nucleotidyltransferase family. Component of the RNA degradosome, which is a multiprotein complex involved in RNA processing and mRNA degradation. Requires Mg(2+) as cofactor.

It is found in the cytoplasm. The enzyme catalyses RNA(n+1) + phosphate = RNA(n) + a ribonucleoside 5'-diphosphate. Involved in mRNA degradation. Catalyzes the phosphorolysis of single-stranded polyribonucleotides processively in the 3'- to 5'-direction. The chain is Polyribonucleotide nucleotidyltransferase from Shewanella oneidensis (strain ATCC 700550 / JCM 31522 / CIP 106686 / LMG 19005 / NCIMB 14063 / MR-1).